A 1037-amino-acid chain; its full sequence is Multidrug resistance protein MdtF (1037 aa).

Topologically, residues 1–9 (MANYFIDRP) are cytoplasmic. The helical transmembrane segment at 10–30 (VFAWVLAIIMMLAGGLAIMNL) threads the bilayer. Over 31 to 338 (PVAQYPQIAP…TTPFIEISIQ (308 aa)) the chain is Periplasmic. The chain crosses the membrane as a helical span at residues 339 to 359 (EVFKTLVEAIILVFLVMYLFL). Over 360-369 (QNFRATIIPT) the chain is Cytoplasmic. Residues 370–390 (IAVPVVILGTFAILSAVGFTI) form a helical membrane-spanning segment. Residues 391-392 (NT) are Periplasmic-facing. The chain crosses the membrane as a helical span at residues 393 to 413 (LTMFGMVLAIGLLVDDAIVVV). Residues 414–441 (ENVERVIAEDKLPPKEATHKSMGQIQRA) are Cytoplasmic-facing. A helical membrane pass occupies residues 442 to 462 (LVGIAVVLSAVFMPMAFMSGA). Topologically, residues 463–471 (TGEIYRQFS) are periplasmic. A helical transmembrane segment spans residues 472-492 (ITLISSMLLSVFVAMSLTPAL). The Cytoplasmic segment spans residues 493–534 (CATILKAAPEGGHKPNALFARFNTLFEKSTQHYTDSTRSLLR). A helical transmembrane segment spans residues 535 to 555 (CTGRYMVIYLLICAGMAVLFL). Over 556-870 (RTPTSFLPEE…SYQEALSSNQ (315 aa)) the chain is Periplasmic. A helical membrane pass occupies residues 871–891 (APALYAISLVVVFLALAALYE). A topological domain (cytoplasmic) is located at residue Ser892. The helical transmembrane segment at 893–913 (WSIPFSVMLVVPLGVVGALLA) threads the bilayer. Topologically, residues 914 to 927 (TDLRGLSNDVYFQV) are periplasmic. The helical transmembrane segment at 928 to 948 (GLLTTIGLSAKNAILIVEFAV) threads the bilayer. Residues 949-972 (EMMQKEGKTPIEAIIEAARMRLRP) are Cytoplasmic-facing. Residues 973-993 (ILMTSLAFILGVLPLVISHGA) traverse the membrane as a helical segment. The Periplasmic portion of the chain corresponds to 994-1006 (GSGAQNAVGTGVM). A helical membrane pass occupies residues 1007–1027 (GGMFAATVLAIYFVPVFFVVV). Over 1028–1037 (EHLFARFKKA) the chain is Cytoplasmic.

It belongs to the resistance-nodulation-cell division (RND) (TC 2.A.6) family. Homotrimer. Part of the tripartite efflux system MdtEF-TolC, which is composed of an inner membrane transporter, MdtF, a membrane fusion protein, MdtE, and an outer membrane component, TolC. The complex forms a large protein conduit and can translocate molecules across both the inner and outer membranes.

Its subcellular location is the cell inner membrane. Functionally, part of the tripartite efflux system MdtEF-TolC, which confers resistance to various compounds. This Escherichia coli O157:H7 protein is Multidrug resistance protein MdtF (mdtF).